Reading from the N-terminus, the 336-residue chain is CASP-like protein UU1 (336 aa).

Residues 1-170 (MGKGPGLDPS…PAMESNKDDN (170 aa)) lie on the Cytoplasmic side of the membrane. A helical transmembrane segment spans residues 171-191 (FFGAIVLSLRAAQIVFTVVGL). Residues 192–222 (GVMGSLKHTSHGDYYYYYYDFSFTQVDSYIG) lie on the Extracellular side of the membrane. A helical membrane pass occupies residues 223-243 (VLSLDVIVCLYAIVQLVLCFI). Over 244 to 261 (QRSNQGKYLSSPTTVAAK) the chain is Cytoplasmic. Residues 262 to 282 (LTFVFDQVLAYALVATAGAAA) traverse the membrane as a helical segment. The Extracellular segment spans residues 283–307 (GSALEIRKGTSCSGTWTVICSKGEA). Residues 308–328 (SVAMSFFAFAFLAATAAVYSV) traverse the membrane as a helical segment. At 329 to 336 (RLLRITGR) the chain is on the cytoplasmic side.

The protein belongs to the Casparian strip membrane proteins (CASP) family. Homodimer and heterodimers.

It is found in the cell membrane. The sequence is that of CASP-like protein UU1 from Physcomitrium patens (Spreading-leaved earth moss).